Consider the following 330-residue polypeptide: Methionyl-tRNA formyltransferase (330 aa).

Residue serine 121–proline 124 participates in (6S)-5,6,7,8-tetrahydrofolate binding.

The protein belongs to the Fmt family.

It catalyses the reaction L-methionyl-tRNA(fMet) + (6R)-10-formyltetrahydrofolate = N-formyl-L-methionyl-tRNA(fMet) + (6S)-5,6,7,8-tetrahydrofolate + H(+). Functionally, attaches a formyl group to the free amino group of methionyl-tRNA(fMet). The formyl group appears to play a dual role in the initiator identity of N-formylmethionyl-tRNA by promoting its recognition by IF2 and preventing the misappropriation of this tRNA by the elongation apparatus. This chain is Methionyl-tRNA formyltransferase, found in Burkholderia cenocepacia (strain ATCC BAA-245 / DSM 16553 / LMG 16656 / NCTC 13227 / J2315 / CF5610) (Burkholderia cepacia (strain J2315)).